We begin with the raw amino-acid sequence, 208 residues long: Protein-L-isoaspartate O-methyltransferase (208 aa).

Residue Ser-59 is part of the active site.

The protein belongs to the methyltransferase superfamily. L-isoaspartyl/D-aspartyl protein methyltransferase family.

It is found in the cytoplasm. The catalysed reaction is [protein]-L-isoaspartate + S-adenosyl-L-methionine = [protein]-L-isoaspartate alpha-methyl ester + S-adenosyl-L-homocysteine. Its function is as follows. Catalyzes the methyl esterification of L-isoaspartyl residues in peptides and proteins that result from spontaneous decomposition of normal L-aspartyl and L-asparaginyl residues. It plays a role in the repair and/or degradation of damaged proteins. This is Protein-L-isoaspartate O-methyltransferase from Escherichia fergusonii (strain ATCC 35469 / DSM 13698 / CCUG 18766 / IAM 14443 / JCM 21226 / LMG 7866 / NBRC 102419 / NCTC 12128 / CDC 0568-73).